A 500-amino-acid polypeptide reads, in one-letter code: NF-kappa-B inhibitor epsilon (500 aa).

Residues methionine 1 to proline 10 show a composition bias toward basic and acidic residues. 3 disordered regions span residues methionine 1–alanine 66, leucine 84–serine 215, and serine 222–valine 241. Phosphoserine is present on residues serine 157, serine 161, and serine 183. Positions serine 161–proline 186 are enriched in low complexity. The segment covering glutamate 196–aspartate 209 has biased composition (basic and acidic residues). ANK repeat units lie at residues aspartate 258–asparagine 291, leucine 293–leucine 322, histidine 326–arginine 355, glutamine 369–valine 398, serine 403–alanine 432, and asparagine 436–leucine 465.

It belongs to the NF-kappa-B inhibitor family. Interacts with RELA, REL, NFKB1 nuclear factor NF-kappa-B p50 subunit and NFKB2 nuclear factor NF-kappa-B p52 subunit. Interacts with HNRNPA2B1; the interaction may be mediated by the RRM2 domain of HNRNPA2B1, and HNRNPA2B1 may interact simultaneously with FAM76B and either NFKBIA or NFKBIE to form a complex. Serine phosphorylated; followed by proteasome-dependent degradation. As to expression, highly expressed in spleen, testis and lung, followed by kidney, pancreas, heart, placenta and brain. Also expressed in granulocytes and macrophages.

It is found in the cytoplasm. Sequesters NF-kappa-B transcription factor complexes in the cytoplasm, thereby inhibiting their activity. Sequestered complexes include NFKB1-RELA (p50-p65) and NFKB1-REL (p50-c-Rel) complexes. Limits B-cell activation in response to pathogens, and also plays an important role in B-cell development. This is NF-kappa-B inhibitor epsilon (NFKBIE) from Homo sapiens (Human).